A 248-amino-acid polypeptide reads, in one-letter code: Mannose-binding protein C (248 aa).

An N-terminal signal peptide occupies residues Met1–Ser20. Positions Gly42–Glu99 constitute a Collagen-like domain. The interval Ile43–Glu111 is disordered. A 4-hydroxyproline modification is found at Pro47. The segment covering Lys49–Glu61 has biased composition (basic and acidic residues). Residues Pro73, Pro79, Pro82, and Pro88 each carry the 4-hydroxyproline modification. The span at Lys75–Ser87 shows a compositional bias: pro residues. The stretch at Arg112–Leu130 forms a coiled coil. The C-type lectin domain occupies Val134–Glu245. Intrachain disulfides connect Cys155/Cys244 and Cys222/Cys236.

Oligomeric complex of 3 or more homotrimers. Interacts with MASP1 and MASP2. Interacts with MEP1A and MEP1B and may inhibit their catalytic activity. In terms of processing, hydroxylation on proline residues within the sequence motif, GXPG, is most likely to be 4-hydroxy as this fits the requirement for 4-hydroxylation in vertebrates.

It is found in the secreted. Its function is as follows. Calcium-dependent lectin involved in innate immune defense. Binds mannose, fucose and N-acetylglucosamine on different microorganisms and activates the lectin complement pathway. Binds to late apoptotic cells, as well as to apoptotic blebs and to necrotic cells, but not to early apoptotic cells, facilitating their uptake by macrophages. This Trachypithecus obscurus (Dusky leaf-monkey) protein is Mannose-binding protein C (MBL2).